Reading from the N-terminus, the 154-residue chain is Protein aau3 (154 aa).

An HTH rrf2-type domain is found at 2–132 (RLTKQTNYAV…QGYTIDDLVK (131 aa)). Residues cysteine 91, cysteine 99, and cysteine 105 each contribute to the [2Fe-2S] cluster site.

[2Fe-2S] cluster is required as a cofactor.

Its function is as follows. Required for growth utilizing PHB cycle intermediates. This Rhizobium meliloti (strain 1021) (Ensifer meliloti) protein is Protein aau3 (aau3).